We begin with the raw amino-acid sequence, 544 residues long: Zinc finger and BTB domain-containing protein 7B (544 aa).

Residues 34–115 (CDLTIRTQGL…AYTATLTTSS (82 aa)) enclose the BTB domain. S150 carries the phosphoserine modification. Disordered stretches follow at residues 171–221 (TTAS…ARAN) and 244–314 (GRLG…EDPI). A compositionally biased stretch (pro residues) spans 186 to 200 (PQVPLLPPPPPPPRP). Positions 201 to 210 (VARRSRKPRK) are enriched in basic residues. Residues K210 and K216 each carry the N6-acetyllysine; by EP300; alternate modification. Residues K210 and K216 each participate in a glycyl lysine isopeptide (Lys-Gly) (interchain with G-Cter in ubiquitin); alternate cross-link. The segment covering 277 to 286 (FEGEEEEEEM) has biased composition (acidic residues). At K339 the chain carries N6-acetyllysine; by EP300; alternate. K339 participates in a covalent cross-link: Glycyl lysine isopeptide (Lys-Gly) (interchain with G-Cter in ubiquitin); alternate. The required for interaction with and acetylation by EP300 stretch occupies residues 348–404 (MPQECPVCHKIIHGAGKLPRHMRTHTGEKPFACEVCGVRFTRNDKLKIHMRKHTGER). Residues 350–372 (QECPVCHKIIHGAGKLPRHMRTH) form a C2H2-type 1 zinc finger. Phosphothreonine is present on T373. 2 C2H2-type zinc fingers span residues 378–400 (FACEVCGVRFTRNDKLKIHMRKH) and 406–428 (YSCPHCPARFLHSYDLKNHMHLH). The C2H2-type 4; atypical zinc-finger motif lies at 434–458 (YECHLCHKAFAKEDHLQRHLKGQNC). 2 disordered regions span residues 465–493 (RRRKDDVAAPHYPPPSTTTSSPAGLDLSN) and 507–544 (WEQSATTGPPVTTQGPPEEEEEEGTPTTPQAEGAMESS). Low complexity-rich tracts occupy residues 511-522 (ATTGPPVTTQGP) and 531-544 (TPTTPQAEGAMESS).

In terms of assembly, homodimerizes. Interacts with NCL, NEDD4 and YBX1. Interacts with HNRNPU (via RNA-binding RGG-box region); the interaction facilitates the recruitment of long non-coding RNA Blnc1 by ZBTB7B. Interacts with HDAC4 and HDAC5; the interaction allows the recruitment of HDAC4 and HDAC5 on CD8 loci for deacetylation and possible inhibition of CD8 genes expression. Post-translationally, acetylated directly and specifically by EP300. EP300-mediated acetylation of Lys-210, Lys-216 and Lys-339 stabilizes the protein by antagonizing ubiquitin conjugation. In terms of processing, ubiquitinated, leading to proteasomal degradation. Competes with acetylation on Lys-210, Lys-216 and Lys-339. In terms of tissue distribution, widely expressed, with a higher level in skin. Expressed in thymus. Restricted to CD4 cells (mature single positive CD4(+) and intermediate CD4(+)CD8(+) cells). Expressed in the luminal epithelial cells in the mammary glands where is up-regulated at late pregnancy and lactation. Expression is enriched in brown fat.

It localises to the nucleus. In terms of biological role, transcription regulator that acts as a key regulator of lineage commitment of immature T-cell precursors. Exerts distinct biological functions in the mammary epithelial cells and T cells in a tissue-specific manner. Necessary and sufficient for commitment of CD4 lineage, while its absence causes CD8 commitment. Development of immature T-cell precursors (thymocytes) to either the CD4 helper or CD8 killer T-cell lineages correlates precisely with their T-cell receptor specificity for major histocompatibility complex class II or class I molecules, respectively. Cross-antagonism between ZBTB7B and CBF complexes are determinative to CD4 versus CD8 cell fate decision. Suppresses RUNX3 expression and imposes CD4+ lineage fate by inducing the SOCS suppressors of cytokine signaling. induces, as a transcriptional activator, SOCS genes expression which represses RUNX3 expression and promotes the CD4+ lineage fate. During CD4 lineage commitment, associates with multiple sites at the CD8 locus, acting as a negative regulator of the CD8 promoter and enhancers by epigenetic silencing through the recruitment of class II histone deacetylases, such as HDAC4 and HDAC5, to these loci. Regulates the development of IL17-producing CD1d-restricted naural killer (NK) T cells. Also functions as an important metabolic regulator in the lactating mammary glands. Critical feed-forward regulator of insulin signaling in mammary gland lactation, directly regulates expression of insulin receptor substrate-1 (IRS-1) and insulin-induced Akt-mTOR-SREBP signaling. Transcriptional repressor of the collagen COL1A1 and COL1A2 genes. May also function as a repressor of fibronectin and possibly other extracellular matrix genes. Potent driver of brown fat development, thermogenesis and cold-induced beige fat formation. Recruits the brown fat lncRNA 1 (Blnc1):HNRNPU ribonucleoprotein complex to activate thermogenic gene expression in brown and beige adipocytes. The chain is Zinc finger and BTB domain-containing protein 7B from Mus musculus (Mouse).